Consider the following 173-residue polypeptide: MEIKDLQDYVAIVNDWPKKGIVFKDITPLMNDGEAYRFATDKIVEYAKELKIDIIVGPEARGFIIGCPVAYALGIGFAPVRKPGKLPRETIEMEYDLEYGTNKLSMHSDAIKPGQRVLITDDLLATGGTIEATIKLVEELGGIVAGCAFLIELKELEGHKKLNGYDRLILMKL.

The protein belongs to the purine/pyrimidine phosphoribosyltransferase family. As to quaternary structure, homodimer.

The protein localises to the cytoplasm. It carries out the reaction AMP + diphosphate = 5-phospho-alpha-D-ribose 1-diphosphate + adenine. It participates in purine metabolism; AMP biosynthesis via salvage pathway; AMP from adenine: step 1/1. In terms of biological role, catalyzes a salvage reaction resulting in the formation of AMP, that is energically less costly than de novo synthesis. This Listeria monocytogenes serovar 1/2a (strain ATCC BAA-679 / EGD-e) protein is Adenine phosphoribosyltransferase.